A 365-amino-acid chain; its full sequence is UDP-N-acetylglucosamine--N-acetylmuramyl-(pentapeptide) pyrophosphoryl-undecaprenol N-acetylglucosamine transferase (365 aa).

UDP-N-acetyl-alpha-D-glucosamine-binding positions include 12-14 (TGG), Asn123, Arg166, Ser194, and Gln295.

This sequence belongs to the glycosyltransferase 28 family. MurG subfamily.

It is found in the cell inner membrane. The catalysed reaction is di-trans,octa-cis-undecaprenyl diphospho-N-acetyl-alpha-D-muramoyl-L-alanyl-D-glutamyl-meso-2,6-diaminopimeloyl-D-alanyl-D-alanine + UDP-N-acetyl-alpha-D-glucosamine = di-trans,octa-cis-undecaprenyl diphospho-[N-acetyl-alpha-D-glucosaminyl-(1-&gt;4)]-N-acetyl-alpha-D-muramoyl-L-alanyl-D-glutamyl-meso-2,6-diaminopimeloyl-D-alanyl-D-alanine + UDP + H(+). It functions in the pathway cell wall biogenesis; peptidoglycan biosynthesis. In terms of biological role, cell wall formation. Catalyzes the transfer of a GlcNAc subunit on undecaprenyl-pyrophosphoryl-MurNAc-pentapeptide (lipid intermediate I) to form undecaprenyl-pyrophosphoryl-MurNAc-(pentapeptide)GlcNAc (lipid intermediate II). This Phenylobacterium zucineum (strain HLK1) protein is UDP-N-acetylglucosamine--N-acetylmuramyl-(pentapeptide) pyrophosphoryl-undecaprenol N-acetylglucosamine transferase.